We begin with the raw amino-acid sequence, 526 residues long: Maturase K (526 aa).

This sequence belongs to the intron maturase 2 family. MatK subfamily.

It localises to the plastid. The protein localises to the chloroplast. Functionally, usually encoded in the trnK tRNA gene intron. Probably assists in splicing its own and other chloroplast group II introns. This is Maturase K from Iris pseudacorus (Yellow flag).